Consider the following 400-residue polypeptide: MTQYSSLLRGLAAGSAFLFLFAPTAFAAEQTVEAPSVDARAWILMDYASGKVLAEGNADEKLDPASLTKIMTSYVVGQALKADKIKLTDMVTVGKDAWATGNPALRGSSVMFLKPGDQVSVADLNKGVIIQSGNDACIALADYVAGSQESFIGLMNGYAKKLGLTNTTFQTVHGLDAPGQFSTARDMALLGKALIHDVPEEYAIHKEKEFTFNKIRQPNRNRLLWSSNLNVDGMKTGTTAGAGYNLVASATQGDMRLISVVLGAKTDRIRFNESEKLLTWGFRFFETVTPIKPDATFVTQRVWFGDKSEVNLGAGEAGSVTIPRGQLKNLKASYTLTEPQLTAPLKKGQVVGTIDFQLNGKSIEQRPLIVMENVEEGGFFGRVWDFVMMKFHQWFGSWFS.

The N-terminal stretch at 1 to 27 is a signal peptide; that stretch reads MTQYSSLLRGLAAGSAFLFLFAPTAFA. Catalysis depends on Ser66, which acts as the Acyl-ester intermediate. Lys69 serves as the catalytic Proton acceptor. The active site involves Ser132. Lys235 is a substrate binding site. The segment at 383–400 is required for inner membrane binding; that stretch reads VWDFVMMKFHQWFGSWFS.

This sequence belongs to the peptidase S11 family.

Its subcellular location is the cell inner membrane. The enzyme catalyses Preferential cleavage: (Ac)2-L-Lys-D-Ala-|-D-Ala. Also transpeptidation of peptidyl-alanyl moieties that are N-acyl substituents of D-alanine.. It participates in cell wall biogenesis; peptidoglycan biosynthesis. In terms of biological role, removes C-terminal D-alanyl residues from sugar-peptide cell wall precursors. The polypeptide is D-alanyl-D-alanine carboxypeptidase DacC (dacC) (Escherichia coli (strain K12)).